Reading from the N-terminus, the 332-residue chain is L-lactate dehydrogenase A chain (332 aa).

Residues 29–57 (GMVGMASAVSILLKDLCDELALVDVMEDK) and arginine 99 contribute to the NAD(+) site. Substrate-binding residues include arginine 106, asparagine 138, and arginine 169. Asparagine 138 contributes to the NAD(+) binding site. Histidine 193 functions as the Proton acceptor in the catalytic mechanism. Substrate is bound at residue threonine 248.

This sequence belongs to the LDH/MDH superfamily. LDH family. Homotetramer.

It is found in the cytoplasm. The catalysed reaction is (S)-lactate + NAD(+) = pyruvate + NADH + H(+). The protein operates within fermentation; pyruvate fermentation to lactate; (S)-lactate from pyruvate: step 1/1. Functionally, interconverts simultaneously and stereospecifically pyruvate and lactate with concomitant interconversion of NADH and NAD(+). This is L-lactate dehydrogenase A chain (ldha) from Sphyraena lucasana (Lucas barracuda).